The following is a 327-amino-acid chain: tRNA N6-adenosine threonylcarbamoyltransferase (327 aa).

H109 and H113 together coordinate Fe cation. Substrate is bound by residues 132–136 (MVSGG), D165, G178, D182, and N268. A Fe cation-binding site is contributed by D296.

The protein belongs to the KAE1 / TsaD family. Fe(2+) is required as a cofactor.

Its subcellular location is the cytoplasm. It catalyses the reaction L-threonylcarbamoyladenylate + adenosine(37) in tRNA = N(6)-L-threonylcarbamoyladenosine(37) in tRNA + AMP + H(+). Its function is as follows. Required for the formation of a threonylcarbamoyl group on adenosine at position 37 (t(6)A37) in tRNAs that read codons beginning with adenine. Is involved in the transfer of the threonylcarbamoyl moiety of threonylcarbamoyl-AMP (TC-AMP) to the N6 group of A37, together with TsaE and TsaB. TsaD likely plays a direct catalytic role in this reaction. This is tRNA N6-adenosine threonylcarbamoyltransferase from Thermotoga petrophila (strain ATCC BAA-488 / DSM 13995 / JCM 10881 / RKU-1).